Here is a 128-residue protein sequence, read N- to C-terminus: Fluoride-specific ion channel FluC (128 aa).

4 helical membrane passes run 4 to 24 (LLLA…RYLI), 39 to 59 (GTLI…EFSM), 71 to 91 (FLTT…YETI), and 99 to 119 (MTLG…FVVI). Na(+) is bound by residues glycine 78 and threonine 81.

It belongs to the fluoride channel Fluc/FEX (TC 1.A.43) family.

It localises to the cell membrane. The catalysed reaction is fluoride(in) = fluoride(out). With respect to regulation, na(+) is not transported, but it plays an essential structural role and its presence is essential for fluoride channel function. Its function is as follows. Fluoride-specific ion channel. Important for reducing fluoride concentration in the cell, thus reducing its toxicity. The polypeptide is Fluoride-specific ion channel FluC (Clostridium perfringens (strain 13 / Type A)).